Reading from the N-terminus, the 185-residue chain is Neuronal vesicle trafficking-associated protein 1 (185 aa).

Residues 1-82 (MVKLGNNFAE…ITEGVTERFK (82 aa)) are Cytoplasmic-facing. The helical; Signal-anchor for type II membrane protein transmembrane segment at 83-103 (VSVLVLFALAFLTCVVFLVVY) threads the bilayer. At 104-185 (KVYKYDRACP…QETEAAEKSA (82 aa)) the chain is on the lumenal side. The tract at residues 129–164 (ESYYAEQDSSAREKFYTVINHYNLAKQSITRSVSPW) is required for GRIP1 interaction.

It belongs to the NSG family. Forms a complex with GRIP1, GRIA2 and STX12 through direct interaction with GRIP1; controls the intracellular fate of AMPAR and the endosomal sorting of the GRIA2 subunit toward recycling and membrane targeting. Interacts with STX12. Interacts with APP; could regulate APP processing. Interacts with FAM171A1.

Its subcellular location is the membrane. It localises to the golgi apparatus. The protein resides in the trans-Golgi network membrane. The protein localises to the endosome membrane. It is found in the cell projection. Its subcellular location is the dendrite. It localises to the early endosome membrane. The protein resides in the late endosome membrane. The protein localises to the lysosome lumen. It is found in the recycling endosome membrane. Its subcellular location is the cytoplasmic vesicle membrane. It localises to the golgi stack membrane. The protein resides in the endosome. The protein localises to the multivesicular body membrane. It is found in the endoplasmic reticulum membrane. Its function is as follows. Plays a role in the recycling mechanism in neurons of multiple receptors, including AMPAR, APP and L1CAM and acts at the level of early endosomes to promote sorting of receptors toward a recycling pathway. Regulates sorting and recycling of GRIA2 through interaction with GRIP1 and then contributes to the regulation of synaptic transmission and plasticity by affecting the recycling and targeting of AMPA receptors to the synapse. Is required for faithful sorting of L1CAM to axons by facilitating trafficking from somatodendritic early endosome or the recycling endosome. In an other hand, induces apoptosis via the activation of CASP3 in response to DNA damage. The chain is Neuronal vesicle trafficking-associated protein 1 from Macaca fascicularis (Crab-eating macaque).